The following is a 638-amino-acid chain: 1-deoxy-D-xylulose-5-phosphate synthase (638 aa).

Thiamine diphosphate-binding positions include H79 and 120-122; that span reads AHS. D151 contacts Mg(2+). Residues 152–153, N180, Y289, and E371 contribute to the thiamine diphosphate site; that span reads GA. N180 contacts Mg(2+).

This sequence belongs to the transketolase family. DXPS subfamily. As to quaternary structure, homodimer. Requires Mg(2+) as cofactor. It depends on thiamine diphosphate as a cofactor.

It carries out the reaction D-glyceraldehyde 3-phosphate + pyruvate + H(+) = 1-deoxy-D-xylulose 5-phosphate + CO2. It participates in metabolic intermediate biosynthesis; 1-deoxy-D-xylulose 5-phosphate biosynthesis; 1-deoxy-D-xylulose 5-phosphate from D-glyceraldehyde 3-phosphate and pyruvate: step 1/1. Its function is as follows. Catalyzes the acyloin condensation reaction between C atoms 2 and 3 of pyruvate and glyceraldehyde 3-phosphate to yield 1-deoxy-D-xylulose-5-phosphate (DXP). The chain is 1-deoxy-D-xylulose-5-phosphate synthase from Rhizobium leguminosarum bv. trifolii (strain WSM2304).